Consider the following 70-residue polypeptide: Large ribosomal subunit protein bL31 (70 aa).

Positions 16, 18, 37, and 40 each coordinate Zn(2+).

This sequence belongs to the bacterial ribosomal protein bL31 family. Type A subfamily. Part of the 50S ribosomal subunit. Zn(2+) serves as cofactor.

Functionally, binds the 23S rRNA. This chain is Large ribosomal subunit protein bL31, found in Ectopseudomonas mendocina (strain ymp) (Pseudomonas mendocina).